Consider the following 119-residue polypeptide: Large ribosomal subunit protein bL19 (119 aa).

Belongs to the bacterial ribosomal protein bL19 family.

In terms of biological role, this protein is located at the 30S-50S ribosomal subunit interface and may play a role in the structure and function of the aminoacyl-tRNA binding site. The sequence is that of Large ribosomal subunit protein bL19 from Treponema denticola (strain ATCC 35405 / DSM 14222 / CIP 103919 / JCM 8153 / KCTC 15104).